A 163-amino-acid chain; its full sequence is NADH-quinone oxidoreductase subunit I (163 aa).

4Fe-4S ferredoxin-type domains are found at residues 55–84 and 94–123; these read RRYP…IEAE and TRYD…EGPN. Cys-64, Cys-67, Cys-70, Cys-74, Cys-103, Cys-106, Cys-109, and Cys-113 together coordinate [4Fe-4S] cluster.

It belongs to the complex I 23 kDa subunit family. In terms of assembly, NDH-1 is composed of 14 different subunits. Subunits NuoA, H, J, K, L, M, N constitute the membrane sector of the complex. [4Fe-4S] cluster serves as cofactor.

It is found in the cell inner membrane. It catalyses the reaction a quinone + NADH + 5 H(+)(in) = a quinol + NAD(+) + 4 H(+)(out). Functionally, NDH-1 shuttles electrons from NADH, via FMN and iron-sulfur (Fe-S) centers, to quinones in the respiratory chain. The immediate electron acceptor for the enzyme in this species is believed to be ubiquinone. Couples the redox reaction to proton translocation (for every two electrons transferred, four hydrogen ions are translocated across the cytoplasmic membrane), and thus conserves the redox energy in a proton gradient. The chain is NADH-quinone oxidoreductase subunit I from Caulobacter vibrioides (strain ATCC 19089 / CIP 103742 / CB 15) (Caulobacter crescentus).